A 152-amino-acid chain; its full sequence is SsrA-binding protein (152 aa).

The protein belongs to the SmpB family.

It is found in the cytoplasm. In terms of biological role, required for rescue of stalled ribosomes mediated by trans-translation. Binds to transfer-messenger RNA (tmRNA), required for stable association of tmRNA with ribosomes. tmRNA and SmpB together mimic tRNA shape, replacing the anticodon stem-loop with SmpB. tmRNA is encoded by the ssrA gene; the 2 termini fold to resemble tRNA(Ala) and it encodes a 'tag peptide', a short internal open reading frame. During trans-translation Ala-aminoacylated tmRNA acts like a tRNA, entering the A-site of stalled ribosomes, displacing the stalled mRNA. The ribosome then switches to translate the ORF on the tmRNA; the nascent peptide is terminated with the 'tag peptide' encoded by the tmRNA and targeted for degradation. The ribosome is freed to recommence translation, which seems to be the essential function of trans-translation. The protein is SsrA-binding protein of Rickettsia montanensis.